A 629-amino-acid chain; its full sequence is Methyl-accepting chemotaxis protein PscA (629 aa).

The Cytoplasmic segment spans residues 1–9 (MKNLGFSKK). Residues 10–30 (ILLAAALIVVVAFSVFIVIND) form a helical membrane-spanning segment. Topologically, residues 31–276 (YRQRQSLKSS…AYAMLTEFRT (246 aa)) are periplasmic. Residues 36–258 (SLKSSVKSEL…QGVATANWYV (223 aa)) enclose the Cache domain. Residues 277–297 (SAITAMVVVVMVIILLLGPLI) traverse the membrane as a helical segment. The 55-residue stretch at 298-352 (RVLMQPLHQMGRAMRDIADGEGDLTKRLAITSHDEFGALAESFNHFVERIHTSIR) folds into the HAMP domain. The Cytoplasmic segment spans residues 298-629 (RVLMQPLHQM…LQQLVGSFRI (332 aa)). A Methyl-accepting transducer domain is found at 357-593 (TAAQLGEVAT…SINVDITHIN (237 aa)).

It belongs to the methyl-accepting chemotaxis (MCP) protein family.

It is found in the cell inner membrane. Chemotactic-signal transducers respond to changes in the concentration of attractants and repellents in the environment, transduce a signal from the outside to the inside of the cell, and facilitate sensory adaptation through the variation of the level of methylation. PscA recognizes specifically and with high affinity L-Asp, D-Asp and L-Glu. It exerts a double function, in mediating chemotaxis to these amino acids and in modulating cyclic di-GMP (c-di-GMP) levels, causing alterations in biofilm development. Plays a key role in the infection process. It may facilitate bacterial entry into the plant. This is Methyl-accepting chemotaxis protein PscA from Pseudomonas syringae pv. tomato (strain ATCC BAA-871 / DC3000).